The following is a 943-amino-acid chain: Isoleucine--tRNA ligase (943 aa).

Residues 58-68 carry the 'HIGH' region motif; it reads PYANGNIHIGH. Glu567 contacts L-isoleucyl-5'-AMP. Residues 608-612 carry the 'KMSKS' region motif; it reads KMSKS. Lys611 lines the ATP pocket. The Zn(2+) site is built by Cys906, Cys909, Cys926, and Cys929.

The protein belongs to the class-I aminoacyl-tRNA synthetase family. IleS type 1 subfamily. As to quaternary structure, monomer. Zn(2+) is required as a cofactor.

The protein localises to the cytoplasm. It carries out the reaction tRNA(Ile) + L-isoleucine + ATP = L-isoleucyl-tRNA(Ile) + AMP + diphosphate. Catalyzes the attachment of isoleucine to tRNA(Ile). As IleRS can inadvertently accommodate and process structurally similar amino acids such as valine, to avoid such errors it has two additional distinct tRNA(Ile)-dependent editing activities. One activity is designated as 'pretransfer' editing and involves the hydrolysis of activated Val-AMP. The other activity is designated 'posttransfer' editing and involves deacylation of mischarged Val-tRNA(Ile). The polypeptide is Isoleucine--tRNA ligase (Pseudomonas savastanoi pv. phaseolicola (strain 1448A / Race 6) (Pseudomonas syringae pv. phaseolicola (strain 1448A / Race 6))).